The following is an 84-amino-acid chain: RNA-binding protein Hfq (84 aa).

Residues 9-68 form the Sm domain; it reads DPYLNTLRKERVPVSIYLVNGIKLQGQIESFDQFVILLKNTVSQMVYKHAISTVVPSRPV.

It belongs to the Hfq family. In terms of assembly, homohexamer.

In terms of biological role, RNA chaperone that binds small regulatory RNA (sRNAs) and mRNAs to facilitate mRNA translational regulation in response to envelope stress, environmental stress and changes in metabolite concentrations. Also binds with high specificity to tRNAs. This Azotobacter vinelandii (strain DJ / ATCC BAA-1303) protein is RNA-binding protein Hfq.